We begin with the raw amino-acid sequence, 243 residues long: uncharacterized protein (243 aa).

This is an uncharacterized protein from Ureaplasma parvum serovar 3 (strain ATCC 700970).